A 73-amino-acid chain; its full sequence is Large ribosomal subunit protein bL31 (73 aa).

The protein belongs to the bacterial ribosomal protein bL31 family. Type A subfamily. Part of the 50S ribosomal subunit.

Its function is as follows. Binds the 23S rRNA. In Bartonella bacilliformis (strain ATCC 35685 / KC583 / Herrer 020/F12,63), this protein is Large ribosomal subunit protein bL31.